The primary structure comprises 434 residues: Alpha-enolase (434 aa).

At S2 the chain carries N-acetylserine. K5 is subject to N6-acetyllysine. S40 lines the Mg(2+) pocket. The residue at position 44 (Y44) is a Phosphotyrosine. An N6-acetyllysine; alternate modification is found at K60. At K60 the chain carries N6-succinyllysine; alternate. K64 and K71 each carry N6-acetyllysine. K89 carries the N6-acetyllysine; alternate modification. K89 carries the N6-succinyllysine; alternate modification. Residues K92 and K126 each carry the N6-acetyllysine modification. Substrate-binding residues include H158 and E167. Residues K193 and K199 each carry the N6-acetyllysine modification. At K202 the chain carries N6-acetyllysine; alternate. K202 is covalently cross-linked (Glycyl lysine isopeptide (Lys-Gly) (interchain with G-Cter in SUMO2); alternate). E210 (proton donor) is an active-site residue. An N6-acetyllysine; alternate mark is found at K228 and K233. An N6-succinyllysine; alternate modification is found at K228. The residue at position 228 (K228) is an N6-(2-hydroxyisobutyryl)lysine; alternate. Residue K233 is modified to N6-malonyllysine; alternate. Mg(2+) is bound at residue D245. Residue S254 is modified to Phosphoserine. K256 is subject to N6-acetyllysine. S263 bears the Phosphoserine mark. K281 is modified (N6-acetyllysine; alternate). N6-(2-hydroxyisobutyryl)lysine; alternate is present on K281. A Phosphotyrosine modification is found at Y287. S291 is modified (phosphoserine). Residues E293 and D318 each coordinate Mg(2+). Residues E293 and D318 each coordinate substrate. Residues K335 and K343 each carry the N6-acetyllysine modification. K343 serves as the catalytic Proton acceptor. Substrate-binding positions include 370-373 (SHRS) and K394. Residues 405-434 (AKYNQILRIEEELGSKAKFAGRSFRNPLAK) are required for interaction with PLG. At K406 the chain carries N6-acetyllysine. K420 is subject to N6-acetyllysine; alternate. Residue K420 is modified to N6-succinyllysine; alternate. At K420 the chain carries N6-malonyllysine; alternate.

The protein belongs to the enolase family. In terms of assembly, mammalian enolase is composed of 3 isozyme subunits, alpha, beta and gamma, which can form homodimers or heterodimers which are cell-type and development-specific. ENO1 interacts with PLG in the neuronal plasma membrane and promotes its activation. The C-terminal lysine is required for this binding. Interacts with ENO4 and PGAM2. Interacts with CMTM6. The cofactor is Mg(2+). In terms of processing, ISGylated. Lysine 2-hydroxyisobutyrylation (Khib) by p300/EP300 activates the phosphopyruvate hydratase activity. In terms of tissue distribution, the alpha/alpha homodimer is expressed in embryo and in most adult tissues. The alpha/beta heterodimer and the beta/beta homodimer are found in striated muscle, and the alpha/gamma heterodimer and the gamma/gamma homodimer in neurons.

Its subcellular location is the cytoplasm. The protein localises to the cell membrane. The catalysed reaction is (2R)-2-phosphoglycerate = phosphoenolpyruvate + H2O. Its pathway is carbohydrate degradation; glycolysis; pyruvate from D-glyceraldehyde 3-phosphate: step 4/5. Functionally, glycolytic enzyme the catalyzes the conversion of 2-phosphoglycerate to phosphoenolpyruvate. In addition to glycolysis, involved in various processes such as growth control, hypoxia tolerance and allergic responses. May also function in the intravascular and pericellular fibrinolytic system due to its ability to serve as a receptor and activator of plasminogen on the cell surface of several cell-types such as leukocytes and neurons. Stimulates immunoglobulin production. This chain is Alpha-enolase (ENO1), found in Bos taurus (Bovine).